Here is an 865-residue protein sequence, read N- to C-terminus: Nitrogen regulatory protein nrfA (865 aa).

5 disordered regions span residues 1-75 (MEGI…DEMQ), 115-140 (RKER…PSGI), 177-227 (FDSP…QDQR), 557-605 (GSTD…RTAS), and 617-663 (LNGS…AGPT). Residues 32-46 (DDFTFDSPFSSSGSS) are compositionally biased toward low complexity. 2 stretches are compositionally biased toward basic and acidic residues: residues 115 to 126 (RKEREQQEREQQ) and 180 to 189 (PAEHPSHPSA). Residues 582–592 (ASVSDVRNQNQ) show a composition bias toward polar residues. A GATA-type zinc finger spans residues 665-689 (CTNCFTQTTPLWRRNPEGQPLCNAC). The interval 713 to 854 (NRSSANTLAV…NHSIAGGQGA (142 aa)) is disordered. Polar residues-rich tracts occupy residues 715–724 (SSANTLAVGT) and 737–764 (IQHA…SNTL). Low complexity-rich tracts occupy residues 771–786 (PIAA…AGVA) and 830–844 (PLAP…ANPA).

It localises to the nucleus. In terms of biological role, major nitrogen regulatory protein. The protein is Nitrogen regulatory protein nrfA (nrfA) of Penicillium urticae.